The following is a 1202-amino-acid chain: Protein jagged-2 (1202 aa).

At 1–1037 the chain is on the extracellular side; that stretch reads GACCDGDGRT…ETVVMGGSST (1037 aa). N107 carries an N-linked (GlcNAc...) asparagine glycan. Positions 150–194 constitute a DSL domain; sequence VRCDENYYSATCNKFCRPRNDFFGHYTCDQYGNKACMDGWMGKEC. Disulfide bonds link C152-C161, C165-C177, C185-C194, C199-C210, C203-C216, C218-C227, C230-C241, C236-C247, C249-C258, C265-C277, C271-C287, C289-C298, C305-C316, C310-C325, C327-C336, C343-C354, C348-C363, C365-C374, C381-C392, C386-C401, C403-C412, C419-C429, C423-C438, C440-C449, C456-C467, C461-C476, C478-C487, C495-C506, C500-C515, C517-C526, C544-C567, C561-C577, C579-C588, C595-C606, C600-C615, C617-C626, C633-C644, C638-C653, C655-C664, C671-C682, C676-C691, and C693-C702. Positions 195 to 228 constitute an EGF-like 1 domain; it reads KEAVCKQGCNLLHGGCTVPGECRCSYGWQGKFCD. Residues 229–259 form the EGF-like 2; atypical domain; sequence ECVPYPGCVHGSCVEPWHCDCETNWGGLLCD. EGF-like domains follow at residues 261–299 and 301–337; these read DLNY…KNCE and AEHA…PTCA. The 37-residue stretch at 339 to 375 folds into the EGF-like 5; calcium-binding domain; sequence DIDECASNPCAAGGTCVDQVDGFECICPEQWVGATCQ. An EGF-like 6; calcium-binding domain is found at 377–413; that stretch reads DANECEGKPCLNAFSCKNLIGGYYCDCLPGWKGANCH. The region spanning 415 to 450 is the EGF-like 7; calcium-binding domain; that stretch reads NINDCHGQCQHGGTCKDLVNGYQCVCPRGFGGRHCE. EGF-like domains follow at residues 452 to 488 and 490 to 527; these read EYYK…PLCE and DVDL…KNCS. N525 is a glycosylation site (N-linked (GlcNAc...) asparagine). In terms of domain architecture, EGF-like 10; atypical spans 529-589; that stretch reads PRETCPGGAC…DSGFTGTYCH (61 aa). An N-linked (GlcNAc...) asparagine glycan is attached at N574. Residues 591 to 627 form the EGF-like 11; calcium-binding domain; sequence NIDDCMGQPCRNGGTCIDEVDSFACFCPSGWEGELCD. Residues 629 to 665 form the EGF-like 12; calcium-binding domain; sequence NPNDCLPDPCHSRGRCYDLVNDFYCVCDDGWKDKTCH. 2 EGF-like domains span residues 667–703 and 706–742; these read REFQ…STCT and KNSS…RTCT. An N-linked (GlcNAc...) asparagine glycan is attached at N707. 9 cysteine pairs are disulfide-bonded: C710–C721, C715–C730, C732–C741, C748–C759, C753–C768, C770–C779, C786–C797, C791–C806, and C808–C817. An EGF-like 15; calcium-binding domain is found at 744 to 780; the sequence is NTNDCNPLPCYNGGICVDGVNWFRCECAPGFAGPDCR. The region spanning 782-818 is the EGF-like 16; calcium-binding domain; that stretch reads NIDECQSSPCAYGATCVDEINGYRCSCPPGRSGPRCQ. Residue N1015 is glycosylated (N-linked (GlcNAc...) asparagine). Residues 1038–1058 traverse the membrane as a helical segment; that stretch reads GLLVPVLCSVFSVLWLACMVI. Over 1059–1202 the chain is Cytoplasmic; that stretch reads CVWWTRKRRK…TKDVRCAGRE (144 aa). Composition is skewed to basic and acidic residues over residues 1070–1080, 1147–1159, and 1185–1202; these read RERSRLPRDES, LSRG…RSRE, and VDNR…AGRE. The tract at residues 1070 to 1202 is disordered; that stretch reads RERSRLPRDE…TKDVRCAGRE (133 aa). S1080 carries the phosphoserine modification.

It localises to the membrane. Functionally, putative Notch ligand involved in the mediation of Notch signaling. May have a role in neurogenesis in the peripheral nervous system, limb development and in the adult brain. The chain is Protein jagged-2 (Jag2) from Rattus norvegicus (Rat).